A 564-amino-acid polypeptide reads, in one-letter code: MFS-type transporter grgE (564 aa).

Positions 1 to 10 (MAENQVDPKR) are enriched in basic and acidic residues. Positions 1–52 (MAENQVDPKRNLPLYGAADESTSATDKEDEVENVRQNGSAPPIEEARESNEA) are disordered. N-linked (GlcNAc...) asparagine glycosylation occurs at Asn-37. The next 7 membrane-spanning stretches (helical) occupy residues 60 to 80 (HGLSLFFIVLAIMLATFIISL), 101 to 118 (KVSWYGSAYFMTFGGFQT), 131 to 151 (TTFLVSLFIFEIGSLICGVAP), 161 to 181 (AIAGLGGAGMATGGFTIIAFS), 192 to 212 (GLVGSAYGLSAVAGPLIGGAF), 220 to 240 (WCFYINLPVGGLAAVIILIFF), and 262 to 282 (LVGVSLLMCLIICFILALQYG). A glycan (N-linked (GlcNAc...) asparagine) is linked at Asn-289. The next 7 membrane-spanning stretches (helical) occupy residues 293–313 (VIGLLVGFVAILVALIIWEYY), 329–349 (ALWAPSTYMFFFAGSYFILLY), 368–388 (VRNLPMVVTFSIAAILAGAFV), 392–412 (GIATPVMLVGAAIATIGTGLI), 425–445 (IGYQILAAFGFVIPWLIPMNI), 462–482 (IFLAQTLGGAFSVSAAQSAFV), and 531–551 (TFAISVGMVGFACLMGLFTPW).

It belongs to the major facilitator superfamily.

The protein localises to the membrane. Functionally, MFS-type transporter; part of the gene cluster that mediates the biosynthesis of gregatin A, a fungal polyketide featuring an alkylated furanone core. In Penicillium sp, this protein is MFS-type transporter grgE.